A 282-amino-acid chain; its full sequence is NAD kinase (282 aa).

Asp67 acts as the Proton acceptor in catalysis. Residues 67–68 (DG), 140–141 (NE), His151, Arg170, Asp172, and 183–188 (TAYNLS) contribute to the NAD(+) site.

Belongs to the NAD kinase family. Requires a divalent metal cation as cofactor.

The protein localises to the cytoplasm. It catalyses the reaction NAD(+) + ATP = ADP + NADP(+) + H(+). In terms of biological role, involved in the regulation of the intracellular balance of NAD and NADP, and is a key enzyme in the biosynthesis of NADP. Catalyzes specifically the phosphorylation on 2'-hydroxyl of the adenosine moiety of NAD to yield NADP. This chain is NAD kinase, found in Halobacterium salinarum (strain ATCC 700922 / JCM 11081 / NRC-1) (Halobacterium halobium).